Consider the following 150-residue polypeptide: Small ribosomal subunit protein uS7c (150 aa).

The protein belongs to the universal ribosomal protein uS7 family. As to quaternary structure, part of the 30S ribosomal subunit.

It localises to the plastid. The protein localises to the chloroplast. In terms of biological role, one of the primary rRNA binding proteins, it binds directly to 16S rRNA where it nucleates assembly of the head domain of the 30S subunit. This is Small ribosomal subunit protein uS7c (rps7) from Huperzia lucidula (Shining clubmoss).